Here is a 264-residue protein sequence, read N- to C-terminus: Teichoic acids export ATP-binding protein TagH (264 aa).

One can recognise an ABC transporter domain in the interval Ile24 to Lys243. Gly57–Ser64 is a binding site for ATP.

This sequence belongs to the ABC transporter superfamily. Teichoic acids exporter (TC 3.A.1.104.1) family. As to quaternary structure, the complex is composed of two ATP-binding proteins (TagH) and two transmembrane proteins (TagG).

The protein localises to the cell membrane. The catalysed reaction is ATP + H2O + teichoic acidSide 1 = ADP + phosphate + teichoic acidSide 2.. Functionally, part of the ABC transporter complex TagGH involved in teichoic acids export. Responsible for energy coupling to the transport system. This chain is Teichoic acids export ATP-binding protein TagH, found in Staphylococcus haemolyticus (strain JCSC1435).